The following is a 135-amino-acid chain: MSFFKEFREFAMRGNVVDLAVGVIIGAAFGKIVSSLVADIIMPPLGLLIGGIDFKQFALTLRPAVGDTPAVIMHYGVFIQNVFDFVIVAFAIFLAIKVINKLHQKKPKEAPGPSKEEVLLTEIRDLLKQQNEHRP.

A run of 2 helical transmembrane segments spans residues 10 to 30 and 76 to 96; these read FAMRGNVVDLAVGVIIGAAFG and GVFIQNVFDFVIVAFAIFLAI.

Belongs to the MscL family. In terms of assembly, homopentamer.

The protein resides in the cell inner membrane. Its function is as follows. Channel that opens in response to stretch forces in the membrane lipid bilayer. May participate in the regulation of osmotic pressure changes within the cell. This chain is Large-conductance mechanosensitive channel, found in Cronobacter sakazakii (strain ATCC BAA-894) (Enterobacter sakazakii).